The sequence spans 356 residues: Glucose 1-dehydrogenase 2 (356 aa).

Zn(2+) is bound at residue aspartate 38. Residue serine 40 participates in substrate binding. Residues histidine 64 and glutamate 65 each coordinate Zn(2+). The substrate site is built by glutamate 114 and glutamate 150. Glutamate 150 lines the Zn(2+) pocket. NADP(+) contacts are provided by residues 181-184 (NGNL), 206-207 (RR), and 301-303 (VVN). Residue asparagine 303 coordinates substrate.

This sequence belongs to the zinc-containing alcohol dehydrogenase family. Glucose 1-dehydrogenase subfamily. Zn(2+) is required as a cofactor.

It carries out the reaction D-glucose + NAD(+) = D-glucono-1,5-lactone + NADH + H(+). It catalyses the reaction D-glucose + NADP(+) = D-glucono-1,5-lactone + NADPH + H(+). Its function is as follows. Catalyzes the NAD(P)(+)-dependent oxidation of D-glucose to D-gluconate via gluconolactone. Can utilize both NAD(+) and NADP(+) as electron acceptor. Is involved in the degradation of glucose through a modified Entner-Doudoroff pathway. In Haloterrigena turkmenica (strain ATCC 51198 / DSM 5511 / JCM 9101 / NCIMB 13204 / VKM B-1734 / 4k) (Halococcus turkmenicus), this protein is Glucose 1-dehydrogenase 2.